Reading from the N-terminus, the 285-residue chain is Diaminopimelate epimerase (285 aa).

Residues Asn-11 and Asn-62 each coordinate substrate. Residue Cys-71 is the Proton donor of the active site. Residues 72–73 (GN), Asn-167, Asn-200, and 218–219 (ER) contribute to the substrate site. The active-site Proton acceptor is Cys-227. Residue 228–229 (GT) coordinates substrate.

This sequence belongs to the diaminopimelate epimerase family. As to quaternary structure, homodimer.

The protein resides in the cytoplasm. It carries out the reaction (2S,6S)-2,6-diaminopimelate = meso-2,6-diaminopimelate. It participates in amino-acid biosynthesis; L-lysine biosynthesis via DAP pathway; DL-2,6-diaminopimelate from LL-2,6-diaminopimelate: step 1/1. Catalyzes the stereoinversion of LL-2,6-diaminopimelate (L,L-DAP) to meso-diaminopimelate (meso-DAP), a precursor of L-lysine and an essential component of the bacterial peptidoglycan. The protein is Diaminopimelate epimerase of Agathobacter rectalis (strain ATCC 33656 / DSM 3377 / JCM 17463 / KCTC 5835 / VPI 0990) (Eubacterium rectale).